Here is a 217-residue protein sequence, read N- to C-terminus: MTDAINPTLIERGRKVFAGDWHFIWASPSIETLPPMAGIEVAFAGRSNVGKSSLINALTGRNALARTSNTPGRTQELIFFDGPTDAGLRLVDMPGYGYAAASKAKVASWTSLIHKFLQGRATLARVYVLIDGRHGLKDVDLDILKTLDKSAVSYQIVFTKADQVKAAELEQRIAATKTVLAKHPAAFPELLMTSSRTGAGMPELRAAMIRLLDERGA.

The EngB-type G domain maps to 37–214 (AGIEVAFAGR…RAAMIRLLDE (178 aa)). GTP-binding positions include 45 to 52 (GRSNVGKS), 72 to 76 (GRTQE), 92 to 95 (DMPG), 159 to 162 (TKAD), and 193 to 195 (TSS). Mg(2+) contacts are provided by Ser52 and Thr74.

The protein belongs to the TRAFAC class TrmE-Era-EngA-EngB-Septin-like GTPase superfamily. EngB GTPase family. Requires Mg(2+) as cofactor.

Necessary for normal cell division and for the maintenance of normal septation. This chain is Probable GTP-binding protein EngB, found in Rhodopseudomonas palustris (strain BisB5).